We begin with the raw amino-acid sequence, 477 residues long: Diphthine methyltransferase (477 aa).

3 WD repeats span residues 194–232 (HFEA…TPVF), 236–276 (RHCM…QPLA), and 422–464 (VKTR…ARTL).

It belongs to the DPH7 family. Interacts with INCA1.

It carries out the reaction diphthine methyl ester-[translation elongation factor 2] + H2O = diphthine-[translation elongation factor 2] + methanol + H(+). Its pathway is protein modification; peptidyl-diphthamide biosynthesis. Its function is as follows. Catalyzes the demethylation of diphthine methyl ester to form diphthine, an intermediate diphthamide biosynthesis, a post-translational modification of histidine which occurs in translation elongation factor 2 (EEF2). This is Diphthine methyltransferase (Dph7) from Mus musculus (Mouse).